A 360-amino-acid polypeptide reads, in one-letter code: Photosystem II protein D1 (360 aa).

3 helical membrane passes run 29–46 (YIGW…TATS), 118–133 (HFLT…EWEL), and 142–156 (WISV…AAAA). Residue His118 participates in chlorophyll a binding. Tyr126 serves as a coordination point for pheophytin a. Residues Asp170 and Glu189 each coordinate [CaMn4O5] cluster. The chain crosses the membrane as a helical span at residues 197–218 (FHQLGVAGVFGGSLFSAMHGSL). Position 198 (His198) interacts with chlorophyll a. Residues His215 and 264–265 (SF) contribute to the a quinone site. His215 lines the Fe cation pocket. Position 272 (His272) interacts with Fe cation. Residues 274–288 (FLGLWPVVGIWLTAL) traverse the membrane as a helical segment. The [CaMn4O5] cluster site is built by His332, Glu333, Asp342, and Ala344. A propeptide spanning residues 345-360 (SGESLPVALTAPAVNG) is cleaved from the precursor.

The protein belongs to the reaction center PufL/M/PsbA/D family. PSII is composed of 1 copy each of membrane proteins PsbA, PsbB, PsbC, PsbD, PsbE, PsbF, PsbH, PsbI, PsbJ, PsbK, PsbL, PsbM, PsbT, PsbX, PsbY, PsbZ, Psb30/Ycf12, at least 3 peripheral proteins of the oxygen-evolving complex and a large number of cofactors. It forms dimeric complexes. Requires The D1/D2 heterodimer binds P680, chlorophylls that are the primary electron donor of PSII, and subsequent electron acceptors. It shares a non-heme iron and each subunit binds pheophytin, quinone, additional chlorophylls, carotenoids and lipids. D1 provides most of the ligands for the Mn4-Ca-O5 cluster of the oxygen-evolving complex (OEC). There is also a Cl(-1) ion associated with D1 and D2, which is required for oxygen evolution. The PSII complex binds additional chlorophylls, carotenoids and specific lipids. as cofactor. Post-translationally, tyr-161 forms a radical intermediate that is referred to as redox-active TyrZ, YZ or Y-Z. C-terminally processed by CTPA; processing is essential to allow assembly of the oxygen-evolving complex and thus photosynthetic growth.

It is found in the plastid. The protein localises to the chloroplast thylakoid membrane. It catalyses the reaction 2 a plastoquinone + 4 hnu + 2 H2O = 2 a plastoquinol + O2. Functionally, photosystem II (PSII) is a light-driven water:plastoquinone oxidoreductase that uses light energy to abstract electrons from H(2)O, generating O(2) and a proton gradient subsequently used for ATP formation. It consists of a core antenna complex that captures photons, and an electron transfer chain that converts photonic excitation into a charge separation. The D1/D2 (PsbA/PsbD) reaction center heterodimer binds P680, the primary electron donor of PSII as well as several subsequent electron acceptors. This chain is Photosystem II protein D1, found in Pyropia yezoensis (Susabi-nori).